Consider the following 504-residue polypeptide: Cytochrome P450 71B7 (504 aa).

A helical membrane pass occupies residues 1–21 (MSILLCFLCLLPVFLVSLSIL). Lys82 participates in a covalent cross-link: Glycyl lysine isopeptide (Lys-Gly) (interchain with G-Cter in ubiquitin). Heme is bound at residue Cys446.

It belongs to the cytochrome P450 family. Heme serves as cofactor. As to expression, highly expressed in rosette leaves. Also expressed in roots, leaves, flowers, and siliques.

Its subcellular location is the membrane. The chain is Cytochrome P450 71B7 (CYP71B7) from Arabidopsis thaliana (Mouse-ear cress).